A 233-amino-acid chain; its full sequence is UPF0280 protein AF_0649 (233 aa).

It belongs to the UPF0280 family.

In Archaeoglobus fulgidus (strain ATCC 49558 / DSM 4304 / JCM 9628 / NBRC 100126 / VC-16), this protein is UPF0280 protein AF_0649.